An 87-amino-acid chain; its full sequence is DNA-directed RNA polymerase subunit omega (87 aa).

Belongs to the RNA polymerase subunit omega family. In terms of assembly, the RNAP catalytic core consists of 2 alpha, 1 beta, 1 beta' and 1 omega subunit. When a sigma factor is associated with the core the holoenzyme is formed, which can initiate transcription.

It carries out the reaction RNA(n) + a ribonucleoside 5'-triphosphate = RNA(n+1) + diphosphate. Its function is as follows. Promotes RNA polymerase assembly. Latches the N- and C-terminal regions of the beta' subunit thereby facilitating its interaction with the beta and alpha subunits. This chain is DNA-directed RNA polymerase subunit omega, found in Ectopseudomonas mendocina (strain ymp) (Pseudomonas mendocina).